Consider the following 669-residue polypeptide: CoB--CoM heterodisulfide reductase iron-sulfur subunit A 1 (669 aa).

153–176 serves as a coordination point for FAD; it reads GGGIAGIQAALDLADQGFKVYLVE. A non-standard amino acid (selenocysteine) is located at residue selenocysteine 200. 4Fe-4S ferredoxin-type domains follow at residues 239–270, 287–318, 584–613, and 617–646; these read KKPR…FDLG, LVYT…FDQE, ITAT…MVEK, and RVAE…LRYY. Cysteine 249, cysteine 252, cysteine 255, cysteine 259, cysteine 296, cysteine 299, cysteine 302, cysteine 306, cysteine 593, cysteine 596, cysteine 599, cysteine 603, cysteine 626, cysteine 629, cysteine 632, and cysteine 636 together coordinate [4Fe-4S] cluster.

The protein belongs to the HdrA family. In terms of assembly, the ferredoxin:CoB-CoM heterodisulfide reductase is composed of three subunits; HdrA, HdrB and HdrC. Requires [4Fe-4S] cluster as cofactor. It depends on FAD as a cofactor.

The protein operates within cofactor metabolism; coenzyme M-coenzyme B heterodisulfide reduction; coenzyme B and coenzyme M from coenzyme M-coenzyme B heterodisulfide: step 1/1. Its function is as follows. Part of a complex that catalyzes the reversible reduction of CoM-S-S-CoB to the thiol-coenzymes H-S-CoM (coenzyme M) and H-S-CoB (coenzyme B). This is CoB--CoM heterodisulfide reductase iron-sulfur subunit A 1 (hdrA1) from Methanopyrus kandleri (strain AV19 / DSM 6324 / JCM 9639 / NBRC 100938).